The chain runs to 600 residues: UvrABC system protein C (600 aa).

The GIY-YIG domain maps to 15-100; it reads NSAGVYEYFN…IKQLHPKYNI (86 aa). A UVR domain is found at 203-238; the sequence is SVLLKNLEKQMLVLAQNENYEEAAKIRDQIATIKDL.

The protein belongs to the UvrC family. As to quaternary structure, interacts with UvrB in an incision complex.

Its subcellular location is the cytoplasm. Functionally, the UvrABC repair system catalyzes the recognition and processing of DNA lesions. UvrC both incises the 5' and 3' sides of the lesion. The N-terminal half is responsible for the 3' incision and the C-terminal half is responsible for the 5' incision. This Campylobacter jejuni subsp. doylei (strain ATCC BAA-1458 / RM4099 / 269.97) protein is UvrABC system protein C.